An 88-amino-acid polypeptide reads, in one-letter code: Large ribosomal subunit protein uL29 (88 aa).

Belongs to the universal ribosomal protein uL29 family.

This Sulfurisphaera tokodaii (strain DSM 16993 / JCM 10545 / NBRC 100140 / 7) (Sulfolobus tokodaii) protein is Large ribosomal subunit protein uL29 (rpl29).